We begin with the raw amino-acid sequence, 156 residues long: 6,7-dimethyl-8-ribityllumazine synthase (156 aa).

5-amino-6-(D-ribitylamino)uracil-binding positions include Phe-22, 57-59 (AYE), and 81-83 (TVI). 86 to 87 (GT) contacts (2S)-2-hydroxy-3-oxobutyl phosphate. Residue His-89 is the Proton donor of the active site. Residue Phe-114 coordinates 5-amino-6-(D-ribitylamino)uracil. Arg-128 contributes to the (2S)-2-hydroxy-3-oxobutyl phosphate binding site.

This sequence belongs to the DMRL synthase family. Forms an icosahedral capsid composed of 60 subunits, arranged as a dodecamer of pentamers.

The catalysed reaction is (2S)-2-hydroxy-3-oxobutyl phosphate + 5-amino-6-(D-ribitylamino)uracil = 6,7-dimethyl-8-(1-D-ribityl)lumazine + phosphate + 2 H2O + H(+). Its pathway is cofactor biosynthesis; riboflavin biosynthesis; riboflavin from 2-hydroxy-3-oxobutyl phosphate and 5-amino-6-(D-ribitylamino)uracil: step 1/2. In terms of biological role, catalyzes the formation of 6,7-dimethyl-8-ribityllumazine by condensation of 5-amino-6-(D-ribitylamino)uracil with 3,4-dihydroxy-2-butanone 4-phosphate. This is the penultimate step in the biosynthesis of riboflavin. This chain is 6,7-dimethyl-8-ribityllumazine synthase, found in Citrobacter koseri (strain ATCC BAA-895 / CDC 4225-83 / SGSC4696).